The sequence spans 351 residues: Prostaglandin reductase 2 (351 aa).

99-100 (FY) contributes to the substrate binding site. NADP(+) is bound by residues 165-168 (GACG), Lys-192, Tyr-208, Asn-231, 253-259 (CGQISQY), 287-289 (FLV), and Asn-337. 288–290 (LVL) provides a ligand contact to substrate.

This sequence belongs to the NADP-dependent oxidoreductase L4BD family. In terms of assembly, monomer.

It localises to the cytoplasm. The enzyme catalyses 13,14-dihydro-15-oxo-prostaglandin E2 + NAD(+) = 15-oxoprostaglandin E2 + NADH + H(+). It catalyses the reaction 13,14-dihydro-15-oxo-prostaglandin E2 + NADP(+) = 15-oxoprostaglandin E2 + NADPH + H(+). The catalysed reaction is 13,14-dihydro-15-oxo-PGF2alpha + NADP(+) = 15-oxoprostaglandin F2alpha + NADPH + H(+). It carries out the reaction 13,14-dihydro-15-oxo-prostaglandin E1 + NADP(+) = 15-oxoprostaglandin E1 + NADPH + H(+). The enzyme catalyses 13,14-dihydro-15-oxo-prostaglandin F1alpha + NADP(+) = 15-oxoprostaglandin F1alpha + NADPH + H(+). In terms of biological role, functions as 15-oxo-prostaglandin 13-reductase and acts on 15-keto-PGE1, 15-keto-PGE2, 15-keto-PGE1-alpha and 15-keto-PGE2-alpha with highest activity towards 15-keto-PGE2. Overexpression represses transcriptional activity of PPARG and inhibits adipocyte differentiation. This Bos taurus (Bovine) protein is Prostaglandin reductase 2 (PTGR2).